A 1372-amino-acid polypeptide reads, in one-letter code: DNA-directed RNA polymerase subunit beta (1372 aa).

This sequence belongs to the RNA polymerase beta chain family. The RNAP catalytic core consists of 2 alpha, 1 beta, 1 beta' and 1 omega subunit. When a sigma factor is associated with the core the holoenzyme is formed, which can initiate transcription.

The catalysed reaction is RNA(n) + a ribonucleoside 5'-triphosphate = RNA(n+1) + diphosphate. In terms of biological role, DNA-dependent RNA polymerase catalyzes the transcription of DNA into RNA using the four ribonucleoside triphosphates as substrates. This chain is DNA-directed RNA polymerase subunit beta, found in Bradyrhizobium sp. (strain BTAi1 / ATCC BAA-1182).